The primary structure comprises 158 residues: Transcription factor HY5 (158 aa).

Residues 1-25 are compositionally biased toward low complexity; sequence MQEQATSSIAASSLPSSSERSSSSA. The segment at 1–105 is disordered; the sequence is MQEQATSSIA…NRVSAQQARE (105 aa). A compositionally biased stretch (basic and acidic residues) spans 26-44; it reads LHHELKEGMESDDEIRRVP. Positions 35 to 46 are interaction with COP1; the sequence is ESDDEIRRVPEM. Over residues 47–58 the composition is skewed to low complexity; sequence GGEATGTTSASG. Residues 86-149 enclose the bZIP domain; the sequence is ENKRLKRLLR…QMLRHILKNT (64 aa). A basic motif region spans residues 88–108; sequence KRLKRLLRNRVSAQQARERKK. Positions 114 to 142 are leucine-zipper; that stretch reads LEARVKELETKNAELEERLSTLQNENQML.

It belongs to the bZIP family. As to quaternary structure, interacts with COP1. Ubiquitinated by COP1. Ubiquitination takes place in darkness and leads to its subsequent degradation, thereby preventing to activate photomorphogenesis signals.

The protein localises to the nucleus. In terms of biological role, transcription factor that promotes photomorphogenesis in the light and positively regulates fruit pigmentation and fruit nutritional quality. Probably acts downstream of the light receptor network and directly affects transcription of light-induced genes. The chain is Transcription factor HY5 (HY5) from Solanum lycopersicum (Tomato).